Consider the following 139-residue polypeptide: GSK3B-interacting protein (139 aa).

The segment at 1–22 is disordered; the sequence is METDCNPMELSSMSGFEEGSEL. The segment at 41 to 45 is required for PRKAR2A interaction; contributes to a protective effect against H(2)O(2)-induced apoptosis; that stretch reads VNDVL. The segment at 115–139 is interaction with GSK3B and acts as a GSK3B inhibitor; it reads SPAYREAFGNALLQRLEALKRDGQS.

This sequence belongs to the GSKIP family. Forms a complex composed of PRKAR2A or PRKAR2B, GSK3B and GSKIP through GSKIP interaction; facilitates PKA-induced phosphorylation of GSK3B leading to GSK3B inactivation; recruits DNM1L through GSK3B for PKA-mediated phosphorylation of DNM1L; promotes beta-catenin degradation through GSK3B-induced phosphorylation of beta-catenin; stabilizes beta-catenin and enhances Wnt-induced signaling through PKA-induced phosphorylation of beta-catenin. Interacts with GSK3B; induces GSK3B-mediated phosphorylation of GSKIP and inhibits GSK3B kinase activity. Post-translationally, phosphorylated by GSK3B. In terms of tissue distribution, detected in heart, brain, placenta, liver, skeletal muscle, kidney, testis, lung and pancreas.

The protein resides in the cytoplasm. It is found in the nucleus. A-kinase anchoring protein for GSK3B and PKA that regulates or facilitates their kinase activity towards their targets. The ternary complex enhances Wnt-induced signaling by facilitating the GSK3B- and PKA-induced phosphorylation of beta-catenin leading to beta-catenin degradation and stabilization respectively. Upon cAMP activation, the ternary complex contributes to neuroprotection against oxidative stress-induced apoptosis by facilitating the PKA-induced phosphorylation of DML1 and PKA-induced inactivation of GSK3B. During neurite outgrowth promotes neuron proliferation; while increases beta-catenin-induced transcriptional activity through GSK3B kinase activity inhibition, reduces N-cadherin level to promote cell cycle progression. The polypeptide is GSK3B-interacting protein (Homo sapiens (Human)).